Here is a 170-residue protein sequence, read N- to C-terminus: Putative 4-hydroxy-4-methyl-2-oxoglutarate aldolase (170 aa).

Substrate is bound by residues 81 to 84 and Arg103; that span reads GDII. Asp104 serves as a coordination point for a divalent metal cation.

It belongs to the class II aldolase/RraA-like family. Homotrimer. A divalent metal cation serves as cofactor.

The enzyme catalyses 4-hydroxy-4-methyl-2-oxoglutarate = 2 pyruvate. The catalysed reaction is oxaloacetate + H(+) = pyruvate + CO2. Catalyzes the aldol cleavage of 4-hydroxy-4-methyl-2-oxoglutarate (HMG) into 2 molecules of pyruvate. Also contains a secondary oxaloacetate (OAA) decarboxylase activity due to the common pyruvate enolate transition state formed following C-C bond cleavage in the retro-aldol and decarboxylation reactions. This Corynebacterium efficiens (strain DSM 44549 / YS-314 / AJ 12310 / JCM 11189 / NBRC 100395) protein is Putative 4-hydroxy-4-methyl-2-oxoglutarate aldolase.